The primary structure comprises 264 residues: Phosphonoacetaldehyde hydrolase (264 aa).

Catalysis depends on aspartate 9, which acts as the Nucleophile. The Mg(2+) site is built by aspartate 9 and alanine 11. Residue lysine 50 is the Schiff-base intermediate with substrate of the active site. Aspartate 183 is a binding site for Mg(2+).

This sequence belongs to the HAD-like hydrolase superfamily. PhnX family. In terms of assembly, homodimer. Requires Mg(2+) as cofactor.

It catalyses the reaction phosphonoacetaldehyde + H2O = acetaldehyde + phosphate + H(+). Involved in phosphonate degradation. The protein is Phosphonoacetaldehyde hydrolase of Bacillus cereus (strain ATCC 10987 / NRS 248).